Reading from the N-terminus, the 2280-residue chain is Protein Ycf2 (2280 aa).

1634-1641 (GSIGTGRS) contributes to the ATP binding site.

Belongs to the Ycf2 family.

Its subcellular location is the plastid. The protein localises to the chloroplast stroma. Probable ATPase of unknown function. Its presence in a non-photosynthetic plant (Epifagus virginiana) and experiments in tobacco indicate that it has an essential function which is probably not related to photosynthesis. In Eucalyptus globulus subsp. globulus (Tasmanian blue gum), this protein is Protein Ycf2.